The chain runs to 223 residues: Phosphoribosylformylglycinamidine synthase subunit PurQ (223 aa).

The Glutamine amidotransferase type-1 domain maps to 4-223 (FAVVVFPGTN…FKGMVEWVRS (220 aa)). C85 functions as the Nucleophile in the catalytic mechanism. Catalysis depends on residues H196 and E198.

In terms of assembly, part of the FGAM synthase complex composed of 1 PurL, 1 PurQ and 2 PurS subunits.

The protein localises to the cytoplasm. It carries out the reaction N(2)-formyl-N(1)-(5-phospho-beta-D-ribosyl)glycinamide + L-glutamine + ATP + H2O = 2-formamido-N(1)-(5-O-phospho-beta-D-ribosyl)acetamidine + L-glutamate + ADP + phosphate + H(+). It catalyses the reaction L-glutamine + H2O = L-glutamate + NH4(+). It functions in the pathway purine metabolism; IMP biosynthesis via de novo pathway; 5-amino-1-(5-phospho-D-ribosyl)imidazole from N(2)-formyl-N(1)-(5-phospho-D-ribosyl)glycinamide: step 1/2. Part of the phosphoribosylformylglycinamidine synthase complex involved in the purines biosynthetic pathway. Catalyzes the ATP-dependent conversion of formylglycinamide ribonucleotide (FGAR) and glutamine to yield formylglycinamidine ribonucleotide (FGAM) and glutamate. The FGAM synthase complex is composed of three subunits. PurQ produces an ammonia molecule by converting glutamine to glutamate. PurL transfers the ammonia molecule to FGAR to form FGAM in an ATP-dependent manner. PurS interacts with PurQ and PurL and is thought to assist in the transfer of the ammonia molecule from PurQ to PurL. The polypeptide is Phosphoribosylformylglycinamidine synthase subunit PurQ (Pyrococcus furiosus (strain ATCC 43587 / DSM 3638 / JCM 8422 / Vc1)).